We begin with the raw amino-acid sequence, 206 residues long: Guanylate kinase (206 aa).

One can recognise a Guanylate kinase-like domain in the interval 3 to 183 (GNLYILSAPS…ALTELKSILT (181 aa)). 10–17 (APSGAGKS) provides a ligand contact to ATP.

This sequence belongs to the guanylate kinase family.

Its subcellular location is the cytoplasm. The enzyme catalyses GMP + ATP = GDP + ADP. Its function is as follows. Essential for recycling GMP and indirectly, cGMP. The protein is Guanylate kinase of Haemophilus ducreyi (strain 35000HP / ATCC 700724).